The sequence spans 327 residues: Lipoyl synthase (327 aa).

The [4Fe-4S] cluster site is built by Cys-66, Cys-71, Cys-77, Cys-92, Cys-96, Cys-99, and Ser-306. In terms of domain architecture, Radical SAM core spans 78–295 (FSKGTATFMI…EKEAYELGFT (218 aa)).

This sequence belongs to the radical SAM superfamily. Lipoyl synthase family. [4Fe-4S] cluster serves as cofactor.

It localises to the cytoplasm. The enzyme catalyses [[Fe-S] cluster scaffold protein carrying a second [4Fe-4S](2+) cluster] + N(6)-octanoyl-L-lysyl-[protein] + 2 oxidized [2Fe-2S]-[ferredoxin] + 2 S-adenosyl-L-methionine + 4 H(+) = [[Fe-S] cluster scaffold protein] + N(6)-[(R)-dihydrolipoyl]-L-lysyl-[protein] + 4 Fe(3+) + 2 hydrogen sulfide + 2 5'-deoxyadenosine + 2 L-methionine + 2 reduced [2Fe-2S]-[ferredoxin]. Its pathway is protein modification; protein lipoylation via endogenous pathway; protein N(6)-(lipoyl)lysine from octanoyl-[acyl-carrier-protein]: step 2/2. Catalyzes the radical-mediated insertion of two sulfur atoms into the C-6 and C-8 positions of the octanoyl moiety bound to the lipoyl domains of lipoate-dependent enzymes, thereby converting the octanoylated domains into lipoylated derivatives. The protein is Lipoyl synthase of Neisseria gonorrhoeae (strain ATCC 700825 / FA 1090).